The sequence spans 527 residues: DNA polymerase epsilon subunit 2 (527 aa).

This sequence belongs to the DNA polymerase epsilon subunit B family. As to quaternary structure, component of the DNA polymerase epsilon complex consisting of four subunits: the catalytic subunit POLE and the accessory subunits POLE2, POLE3 and POLE4.

It is found in the nucleus. Accessory component of the DNA polymerase epsilon complex. Participates in DNA repair and in chromosomal DNA replication. The chain is DNA polymerase epsilon subunit 2 (Pole2) from Mus musculus (Mouse).